The sequence spans 130 residues: Protein ApaG (130 aa).

The 125-residue stretch at 3–127 (KAETRGISVI…FSLDVPHMRR (125 aa)) folds into the ApaG domain.

The polypeptide is Protein ApaG (Methylobacterium nodulans (strain LMG 21967 / CNCM I-2342 / ORS 2060)).